A 105-amino-acid chain; its full sequence is uncharacterized protein (105 aa).

This is an uncharacterized protein from Felis catus (Cat).